The sequence spans 245 residues: Acetoacetate decarboxylase (245 aa).

K116 (schiff-base intermediate with acetoacetate) is an active-site residue.

The protein belongs to the ADC family.

It catalyses the reaction acetoacetate + H(+) = acetone + CO2. Catalyzes the conversion of acetoacetate to acetone and carbon dioxide. The sequence is that of Acetoacetate decarboxylase from Acidiphilium cryptum (strain JF-5).